The chain runs to 121 residues: NADH-quinone oxidoreductase subunit A (121 aa).

3 consecutive transmembrane segments (helical) span residues 8 to 28 (YLPI…TIIG), 65 to 85 (LVAI…PWAI), and 93 to 113 (QGMI…FYII).

Belongs to the complex I subunit 3 family. In terms of assembly, NDH-1 is composed of 14 different subunits. Subunits NuoA, H, J, K, L, M, N constitute the membrane sector of the complex.

It localises to the cell inner membrane. It catalyses the reaction a quinone + NADH + 5 H(+)(in) = a quinol + NAD(+) + 4 H(+)(out). Functionally, NDH-1 shuttles electrons from NADH, via FMN and iron-sulfur (Fe-S) centers, to quinones in the respiratory chain. The immediate electron acceptor for the enzyme in this species is believed to be a menaquinone. Couples the redox reaction to proton translocation (for every two electrons transferred, four hydrogen ions are translocated across the cytoplasmic membrane), and thus conserves the redox energy in a proton gradient. This chain is NADH-quinone oxidoreductase subunit A, found in Flavobacterium psychrophilum (strain ATCC 49511 / DSM 21280 / CIP 103535 / JIP02/86).